The chain runs to 138 residues: Calmodulin-beta (138 aa).

EF-hand domains are found at residues 1 to 32 (EFKEAFSLFDKDGDGTITTKELGTVMRSLGQN), 33 to 68 (PTEAELQDMINEVDADGNGTIDFPEFLTMMARKMKE), 70 to 105 (DSEEEIREAFRVFDKDGNGFISAAELRHVMTNLGEK), and 106 to 138 (LTDEEVDEMIREADIDGDGQVNYEEFVAMMTSK). The Ca(2+) site is built by aspartate 10, aspartate 12, aspartate 14, threonine 16, glutamate 21, aspartate 46, aspartate 48, asparagine 50, threonine 52, glutamate 57, aspartate 83, aspartate 85, asparagine 87, glutamate 94, aspartate 119, aspartate 121, aspartate 123, glutamine 125, and glutamate 130.

The protein belongs to the calmodulin family.

In terms of biological role, calmodulin mediates the control of a large number of enzymes, ion channels and other proteins by Ca(2+). Among the enzymes to be stimulated by the calmodulin-Ca(2+) complex are a number of protein kinases and phosphatases. The chain is Calmodulin-beta from Arbacia punctulata (Punctuate sea urchin).